The following is an 891-amino-acid chain: DNA mismatch repair protein MutS (891 aa).

617–624 (GPNMSGKS) provides a ligand contact to ATP. Residues 805 to 827 (REKIEEEEPKTKDTKRGPSEKVK) are compositionally biased toward basic and acidic residues. The segment at 805-840 (REKIEEEEPKTKDTKRGPSEKVKNASPTLPRDEKGR) is disordered.

Belongs to the DNA mismatch repair MutS family.

Functionally, this protein is involved in the repair of mismatches in DNA. It is possible that it carries out the mismatch recognition step. This protein has a weak ATPase activity. The chain is DNA mismatch repair protein MutS from Porphyromonas gingivalis (strain ATCC BAA-308 / W83).